A 419-amino-acid chain; its full sequence is Sulfate adenylyltransferase (419 aa).

The protein belongs to the sulfate adenylyltransferase family.

It carries out the reaction sulfate + ATP + H(+) = adenosine 5'-phosphosulfate + diphosphate. The protein operates within sulfur metabolism; hydrogen sulfide biosynthesis; sulfite from sulfate: step 1/3. This is Sulfate adenylyltransferase from Psychrobacter sp. (strain PRwf-1).